The primary structure comprises 195 residues: Imidazoleglycerol-phosphate dehydratase (195 aa).

This sequence belongs to the imidazoleglycerol-phosphate dehydratase family.

The protein localises to the cytoplasm. It catalyses the reaction D-erythro-1-(imidazol-4-yl)glycerol 3-phosphate = 3-(imidazol-4-yl)-2-oxopropyl phosphate + H2O. Its pathway is amino-acid biosynthesis; L-histidine biosynthesis; L-histidine from 5-phospho-alpha-D-ribose 1-diphosphate: step 6/9. This chain is Imidazoleglycerol-phosphate dehydratase, found in Leuconostoc mesenteroides subsp. mesenteroides (strain ATCC 8293 / DSM 20343 / BCRC 11652 / CCM 1803 / JCM 6124 / NCDO 523 / NBRC 100496 / NCIMB 8023 / NCTC 12954 / NRRL B-1118 / 37Y).